A 297-amino-acid chain; its full sequence is Nucleotide-binding protein Bxeno_A0336 (297 aa).

8–15 (GISGSGKS) contributes to the ATP binding site. A GTP-binding site is contributed by 57–60 (DARS).

The protein belongs to the RapZ-like family.

Its function is as follows. Displays ATPase and GTPase activities. In Paraburkholderia xenovorans (strain LB400), this protein is Nucleotide-binding protein Bxeno_A0336.